The following is a 550-amino-acid chain: Arginine--tRNA ligase (550 aa).

A 'HIGH' region motif is present at residues 125 to 135 (ANPTGPLHIGH).

Belongs to the class-I aminoacyl-tRNA synthetase family. Monomer.

It localises to the cytoplasm. The catalysed reaction is tRNA(Arg) + L-arginine + ATP = L-arginyl-tRNA(Arg) + AMP + diphosphate. This Lawsonia intracellularis (strain PHE/MN1-00) protein is Arginine--tRNA ligase.